The following is a 913-amino-acid chain: Translation initiation factor IF-2 (913 aa).

The segment at 1–322 (MTDNNDDKTL…QEKFRRSQMQ (322 aa)) is disordered. The segment covering 60–113 (VQPVVAAPKPAAPAPVAARPQAPQPRIHQPGGQQQRPGSSQSQQRSGSSAPQQR) has biased composition (low complexity). Basic and acidic residues predominate over residues 131-180 (MEARRRALMEAQARDVVEAKQRAEDEARRKVEEEQRIAAEKMEAANRAAE). 3 stretches are compositionally biased toward low complexity: residues 181–195 (EAAAAKVAASQPAAE), 203–238 (ERPAAAAAPAPRTDARPQSAAAAPRSAPATPDAAAP), and 261–277 (PARGKVVAPAPAKPAAR). A tr-type G domain is found at 411-578 (SRPPVVTIMG…AILLQAEILD (168 aa)). Residues 420–427 (GHVDHGKT) are G1. GTP is bound at residue 420-427 (GHVDHGKT). Positions 445–449 (GITQH) are G2. The tract at residues 466–469 (DTPG) is G3. GTP-binding positions include 466-470 (DTPGH) and 520-523 (NKID). The interval 520–523 (NKID) is G4. The G5 stretch occupies residues 556–558 (SAK).

Belongs to the TRAFAC class translation factor GTPase superfamily. Classic translation factor GTPase family. IF-2 subfamily.

It localises to the cytoplasm. Its function is as follows. One of the essential components for the initiation of protein synthesis. Protects formylmethionyl-tRNA from spontaneous hydrolysis and promotes its binding to the 30S ribosomal subunits. Also involved in the hydrolysis of GTP during the formation of the 70S ribosomal complex. This Agrobacterium fabrum (strain C58 / ATCC 33970) (Agrobacterium tumefaciens (strain C58)) protein is Translation initiation factor IF-2.